A 143-amino-acid chain; its full sequence is MALLGTYNHTLDDKGRLTIPSKMREQFKDDKVFISLGFDGCVDVRNEAEWLKWTEKVASTGQATAEGRALTRKIMSMSDETTFDNAGRIKISSILQNKANITKDVVIIGNNDHLELWDLKVWEVYIEQAPGIEEAAKNFEEKI.

SpoVT-AbrB domains lie at 6–49 and 78–121; these read TYNH…NEAE and SDET…DLKV.

This sequence belongs to the MraZ family. As to quaternary structure, forms oligomers.

The protein localises to the cytoplasm. It localises to the nucleoid. This Spiroplasma kunkelii protein is Transcriptional regulator MraZ.